A 275-amino-acid chain; its full sequence is Mitochondrial outer membrane porin (275 aa).

It belongs to the eukaryotic mitochondrial porin (TC 1.B.8.1) family.

The protein resides in the mitochondrion outer membrane. Forms a channel through the cell membrane that allows diffusion of small hydrophilic molecules. The channel adopts an open conformation at low or zero membrane potential and a closed conformation at potentials above 30-40 mV. The open state has a weak anion selectivity whereas the closed state is cation-selective. The polypeptide is Mitochondrial outer membrane porin (VDAC1) (Triticum aestivum (Wheat)).